Consider the following 779-residue polypeptide: Phosphoribosylformylglycinamidine synthase subunit PurL (779 aa).

H52 is an active-site residue. Positions 55 and 94 each coordinate ATP. E96 provides a ligand contact to Mg(2+). Residues 97–100 and R119 each bind substrate; that span reads SHNH. The active-site Proton acceptor is the H98. Residue D120 coordinates Mg(2+). Q243 contributes to the substrate binding site. D271 serves as a coordination point for Mg(2+). 315–317 contacts substrate; sequence ESQ. ATP contacts are provided by N523 and G560. N561 lines the Mg(2+) pocket. S563 is a substrate binding site.

It belongs to the FGAMS family. In terms of assembly, monomer. Part of the FGAM synthase complex composed of 1 PurL, 1 PurQ and 2 PurS subunits.

Its subcellular location is the cytoplasm. It carries out the reaction N(2)-formyl-N(1)-(5-phospho-beta-D-ribosyl)glycinamide + L-glutamine + ATP + H2O = 2-formamido-N(1)-(5-O-phospho-beta-D-ribosyl)acetamidine + L-glutamate + ADP + phosphate + H(+). Its pathway is purine metabolism; IMP biosynthesis via de novo pathway; 5-amino-1-(5-phospho-D-ribosyl)imidazole from N(2)-formyl-N(1)-(5-phospho-D-ribosyl)glycinamide: step 1/2. Its function is as follows. Part of the phosphoribosylformylglycinamidine synthase complex involved in the purines biosynthetic pathway. Catalyzes the ATP-dependent conversion of formylglycinamide ribonucleotide (FGAR) and glutamine to yield formylglycinamidine ribonucleotide (FGAM) and glutamate. The FGAM synthase complex is composed of three subunits. PurQ produces an ammonia molecule by converting glutamine to glutamate. PurL transfers the ammonia molecule to FGAR to form FGAM in an ATP-dependent manner. PurS interacts with PurQ and PurL and is thought to assist in the transfer of the ammonia molecule from PurQ to PurL. The sequence is that of Phosphoribosylformylglycinamidine synthase subunit PurL from Prochlorococcus marinus (strain MIT 9301).